We begin with the raw amino-acid sequence, 266 residues long: Protein crossbronx-like (266 aa).

The UBC core domain occupies 15–178 (KQGYHILAEY…VQEQAIASRN (164 aa)).

This sequence belongs to the ubiquitin-conjugating enzyme family. FTS subfamily.

The protein is Protein crossbronx-like of Drosophila yakuba (Fruit fly).